Reading from the N-terminus, the 144-residue chain is Neuritin-B (144 aa).

The first 27 residues, 1–27 (MGLKLSGRYIFLVLAVHLAYLLQAVKA), serve as a signal peptide directing secretion. The GPI-anchor amidated serine moiety is linked to residue Ser114. Residues 115-144 (TGAPGPRLLFPAFLPLLIVFLSALLNWVLQ) constitute a propeptide, removed in mature form.

It belongs to the neuritin family.

It localises to the cell membrane. Functionally, modulates postsynaptic dendritic arbor elaboration and synaptic maturation. This Xenopus laevis (African clawed frog) protein is Neuritin-B (nrn1-b).